Reading from the N-terminus, the 167-residue chain is Large ribosomal subunit protein uL10 (167 aa).

This sequence belongs to the universal ribosomal protein uL10 family. As to quaternary structure, part of the ribosomal stalk of the 50S ribosomal subunit. The N-terminus interacts with L11 and the large rRNA to form the base of the stalk. The C-terminus forms an elongated spine to which L12 dimers bind in a sequential fashion forming a multimeric L10(L12)X complex.

Its function is as follows. Forms part of the ribosomal stalk, playing a central role in the interaction of the ribosome with GTP-bound translation factors. The polypeptide is Large ribosomal subunit protein uL10 (Latilactobacillus sakei subsp. sakei (strain 23K) (Lactobacillus sakei subsp. sakei)).